The chain runs to 186 residues: Auxin-responsive protein IAA4 (186 aa).

The EAR-like (transcriptional repression) signature appears at 18–22 (LRLGL). Residues 25–62 (TEETVSCGKSNKRVLPEATEKEIESTGKTETASPPKAQ) form a disordered region. A compositionally biased stretch (basic and acidic residues) spans 38–51 (VLPEATEKEIESTG). The region spanning 88 to 175 (GNYVKVSMDG…SCKRLRIMKG (88 aa)) is the PB1 domain.

This sequence belongs to the Aux/IAA family. In terms of assembly, homodimers and heterodimers. Interacts with TPL. As to expression, preferentially expressed in stems, leaves and flowers.

The protein localises to the nucleus. Functionally, aux/IAA proteins are short-lived transcriptional factors that function as repressors of early auxin response genes at low auxin concentrations. Repression is thought to result from the interaction with auxin response factors (ARFs), proteins that bind to the auxin-responsive promoter element (AuxRE). Formation of heterodimers with ARF proteins may alter their ability to modulate early auxin response genes expression. The protein is Auxin-responsive protein IAA4 (IAA4) of Arabidopsis thaliana (Mouse-ear cress).